We begin with the raw amino-acid sequence, 469 residues long: 3-isopropylmalate dehydratase large subunit (469 aa).

[4Fe-4S] cluster is bound by residues cysteine 350, cysteine 410, and cysteine 413.

This sequence belongs to the aconitase/IPM isomerase family. LeuC type 1 subfamily. Heterodimer of LeuC and LeuD. Requires [4Fe-4S] cluster as cofactor.

It carries out the reaction (2R,3S)-3-isopropylmalate = (2S)-2-isopropylmalate. It participates in amino-acid biosynthesis; L-leucine biosynthesis; L-leucine from 3-methyl-2-oxobutanoate: step 2/4. In terms of biological role, catalyzes the isomerization between 2-isopropylmalate and 3-isopropylmalate, via the formation of 2-isopropylmaleate. In Brucella melitensis biotype 2 (strain ATCC 23457), this protein is 3-isopropylmalate dehydratase large subunit.